The primary structure comprises 249 residues: MEIFSVDWTGQTPPHIPRKSLPRHVAVVMDGNGRWANQRNLPRIEGHKAGESALIDVVAGAVQVGVPYLSLYVFSTENWLRAPDEVRFLLRFTRDVIARRRELFAHWGVRVRWSGVPNRLGKVLVKELRDTEEITKKNTAMNLNVCLNYGSRQEIVNAIKSIVSDVNSGLISAKSVNEKIISRRMYMPDFPDVDLFLRSSGENRMSNFMLWQSAYAELIFMSKLWPDFRRDDFWAALRAYSGRSRRFGR.

Aspartate 30 is an active-site residue. Position 30 (aspartate 30) interacts with Mg(2+). Residues 31–34 (GNGR), tryptophan 35, arginine 43, histidine 47, and 75–77 (STE) each bind substrate. Residue asparagine 78 is the Proton acceptor of the active site. Residues tryptophan 79, arginine 81, arginine 198, and 204 to 206 (RMS) contribute to the substrate site. Glutamate 217 is a binding site for Mg(2+).

This sequence belongs to the UPP synthase family. As to quaternary structure, homodimer. Requires Mg(2+) as cofactor.

Catalyzes the condensation of isopentenyl diphosphate (IPP) with allylic pyrophosphates generating different type of terpenoids. The sequence is that of Isoprenyl transferase 1 from Tropheryma whipplei (strain Twist) (Whipple's bacillus).